Reading from the N-terminus, the 345-residue chain is L-threonine 3-dehydrogenase (345 aa).

Residue C42 coordinates Zn(2+). Residues T44 and H47 each act as charge relay system in the active site. Residues H67, E68, C97, C100, C103, and C111 each coordinate Zn(2+). NAD(+) contacts are provided by residues I179, D199, R204, 266-268, and 290-291; these read LGI and IY.

This sequence belongs to the zinc-containing alcohol dehydrogenase family. Homotetramer. Zn(2+) is required as a cofactor.

It is found in the cytoplasm. The enzyme catalyses L-threonine + NAD(+) = (2S)-2-amino-3-oxobutanoate + NADH + H(+). The protein operates within amino-acid degradation; L-threonine degradation via oxydo-reductase pathway; glycine from L-threonine: step 1/2. Functionally, catalyzes the NAD(+)-dependent oxidation of L-threonine to 2-amino-3-ketobutyrate. This chain is L-threonine 3-dehydrogenase, found in Rhizobium rhizogenes (strain K84 / ATCC BAA-868) (Agrobacterium radiobacter).